A 465-amino-acid chain; its full sequence is Plasma alpha-L-fucosidase (465 aa).

The N-terminal stretch at 1 to 26 (MRPQELPRLAFPLLLLLLLPPPPCPA) is a signal peptide. N-linked (GlcNAc...) asparagine glycans are attached at residues asparagine 169 and asparagine 237. Serine 299 is subject to Phosphoserine. Asparagine 375 is a glycosylation site (N-linked (GlcNAc...) asparagine).

It belongs to the glycosyl hydrolase 29 family. As to quaternary structure, homotetramer.

The protein localises to the secreted. The enzyme catalyses an alpha-L-fucoside + H2O = L-fucose + an alcohol. Alpha-L-fucosidase is responsible for hydrolyzing the alpha-1,6-linked fucose joined to the reducing-end N-acetylglucosamine of the carbohydrate moieties of glycoproteins. This is Plasma alpha-L-fucosidase (FUCA2) from Pongo abelii (Sumatran orangutan).